A 383-amino-acid polypeptide reads, in one-letter code: Anhydro-N-acetylmuramic acid kinase (383 aa).

9–16 (GTSLDGID) serves as a coordination point for ATP.

This sequence belongs to the anhydro-N-acetylmuramic acid kinase family.

It carries out the reaction 1,6-anhydro-N-acetyl-beta-muramate + ATP + H2O = N-acetyl-D-muramate 6-phosphate + ADP + H(+). The protein operates within amino-sugar metabolism; 1,6-anhydro-N-acetylmuramate degradation. It participates in cell wall biogenesis; peptidoglycan recycling. Functionally, catalyzes the specific phosphorylation of 1,6-anhydro-N-acetylmuramic acid (anhMurNAc) with the simultaneous cleavage of the 1,6-anhydro ring, generating MurNAc-6-P. Is required for the utilization of anhMurNAc either imported from the medium or derived from its own cell wall murein, and thus plays a role in cell wall recycling. This chain is Anhydro-N-acetylmuramic acid kinase, found in Clostridioides difficile (strain 630) (Peptoclostridium difficile).